Consider the following 625-residue polypeptide: Tumor necrosis factor receptor superfamily member 11A (625 aa).

The signal sequence occupies residues 1 to 30 (MAPRARRRRQLPAPLLALCVLLVPLQVTLQ). Residues 31–214 (VTPPCTQERH…PKEAQAYLPS (184 aa)) are Extracellular-facing. Intrachain disulfides connect Cys35–Cys47, Cys48–Cys61, Cys51–Cys69, Cys72–Cys87, Cys93–Cys113, Cys115–Cys128, Cys125–Cys127, Cys134–Cys152, and Cys155–Cys170. TNFR-Cys repeat units lie at residues 35-69 (CTQE…DSVC), 72-113 (CGPD…PRRC), 115-152 (CTAG…DTVC), and 155-195 (CLLG…DVVC). N-linked (GlcNAc...) asparagine glycosylation is present at Asn106. Residues Cys134, Ala135, Phe138, Ser161, and Val163 each contribute to the Na(+) site. Asn175 is a glycosylation site (N-linked (GlcNAc...) asparagine). The cysteines at positions 176 and 195 are disulfide-linked. Residues 215–234 (LIVLLLFISVVVVAAIIFGV) form a helical membrane-spanning segment. The Cytoplasmic segment spans residues 235–625 (YYRKGGKALT…HTQGSGQCAE (391 aa)). 3 disordered regions span residues 331-356 (TQGD…STGS), 388-413 (GTES…MPVS), and 479-524 (SMAE…FISS). The span at 499–511 (SGSSPSDQPPASG) shows a compositional bias: low complexity. Residues 512–524 (NVTGNSNSTFISS) are compositionally biased toward polar residues. Residues 532–537 (GDIIVV) form a required for interaction with EEIG1 and osteoclast differentiation region. Positions 542-625 (TSQEGPGSAE…HTQGSGQCAE (84 aa)) are disordered. The span at 543-558 (SQEGPGSAEPESEPVG) shows a compositional bias: low complexity. Basic and acidic residues predominate over residues 561–571 (VQEETLAHRDS). Ser571 carries the post-translational modification Phosphoserine. Positions 603–625 (RPVQEQGGAQTSLHTQGSGQCAE) are enriched in polar residues.

Binds to the clefts between the subunits of the TNFSF11 ligand trimer to form a heterohexamer. Part of a complex composed of EEIG1, TNFRSF11A/RANK, PLCG2, GAB2, TEC and BTK; complex formation increases in the presence of TNFSF11/RANKL. Interacts with TRAF1, TRAF2, TRAF3, TRAF5 and TRAF6. Interacts (via cytoplasmic domain) with GAB2. Interacts (via cytoplasmic domain); with EEIG1 (via N-terminus); when in the presence of TNFSF11/RANKL. As to expression, ubiquitous expression with high levels in trabecular bone, thymus, small intestine, lung, brain and kidney. Weakly expressed in spleen and bone marrow.

Its subcellular location is the cell membrane. The protein localises to the membrane raft. Its function is as follows. Receptor for TNFSF11/RANKL/TRANCE/OPGL; essential for RANKL-mediated osteoclastogenesis. Its interaction with EEIG1 promotes osteoclastogenesis via facilitating the transcription of NFATC1 and activation of PLCG2. Involved in the regulation of interactions between T-cells and dendritic cells. The sequence is that of Tumor necrosis factor receptor superfamily member 11A (Tnfrsf11a) from Mus musculus (Mouse).